Reading from the N-terminus, the 64-residue chain is Conotoxin Im11.1 (64 aa).

A signal peptide spans Met-1 to Ala-26. Disulfide bonds link Cys-27–Cys-41, Cys-34–Cys-46, Cys-40–Cys-50, and Cys-45–Cys-54. An Asparagine amide modification is found at Asn-57. A propeptide spanning residues Ala-61–Gln-64 is cleaved from the precursor.

It belongs to the conotoxin I2 superfamily. Expressed by the venom duct.

Its subcellular location is the secreted. The chain is Conotoxin Im11.1 from Conus imperialis (Imperial cone).